Reading from the N-terminus, the 420-residue chain is Glycogen synthase kinase-3 beta (420 aa).

The span at 1–24 shows a compositional bias: polar residues; that stretch reads MSGRPRTTSFAESCKPVQQPSSFG. Positions 1 to 50 are disordered; it reads MSGRPRTTSFAESCKPVQQPSSFGSMKVSRDKDGSKVTTVVATPGQGPDR. Residues 56-340 enclose the Protein kinase domain; the sequence is YTDTKVIGNG…PLDACAHSFF (285 aa). ATP contacts are provided by residues 62–70 and Lys-85; that span reads IGNGSFGVV. The Proton acceptor role is filled by Asp-181. Residues 384 to 420 are disordered; that stretch reads NQAAVSTTSNTTSTSDSNTGERGSTNNAASASASNSS. 2 stretches are compositionally biased toward low complexity: residues 389–401 and 409–420; these read STTS…SDSN and NNAASASASNSS.

The protein belongs to the protein kinase superfamily. CMGC Ser/Thr protein kinase family. GSK-3 subfamily. Phosphorylated. Activated by phosphorylation at Tyr-216.

It localises to the cytoplasm. Its subcellular location is the nucleus. The protein localises to the cell membrane. The catalysed reaction is L-seryl-[tau protein] + ATP = O-phospho-L-seryl-[tau protein] + ADP + H(+). It carries out the reaction L-threonyl-[tau protein] + ATP = O-phospho-L-threonyl-[tau protein] + ADP + H(+). Plays a role in the organization of the formation of the main body axis of developing embryo. Acts as an inhibitor of differentiation of primary neurons. Inhibits the ability of ectopically expressed NEUROD1 and other bHLH factors to promote early retinal cell differentiation. May participate in the Wnt signaling pathway. May regulate the circadian clock via phosphorylation of the major clock components. The protein is Glycogen synthase kinase-3 beta (gsk3b) of Xenopus laevis (African clawed frog).